The sequence spans 592 residues: Aspartate--tRNA ligase (592 aa).

An L-aspartate-binding site is contributed by glutamate 173. Residues 197–200 (QLFK) are aspartate. Residue arginine 219 participates in L-aspartate binding. ATP contacts are provided by residues 219–221 (RDE) and glutamine 228. Residue histidine 448 coordinates L-aspartate. ATP is bound at residue glutamate 482. Residue arginine 489 participates in L-aspartate binding. 534-537 (GLDR) contacts ATP.

The protein belongs to the class-II aminoacyl-tRNA synthetase family. Type 1 subfamily. As to quaternary structure, homodimer.

It is found in the cytoplasm. The catalysed reaction is tRNA(Asp) + L-aspartate + ATP = L-aspartyl-tRNA(Asp) + AMP + diphosphate. Its function is as follows. Catalyzes the attachment of L-aspartate to tRNA(Asp) in a two-step reaction: L-aspartate is first activated by ATP to form Asp-AMP and then transferred to the acceptor end of tRNA(Asp). This chain is Aspartate--tRNA ligase, found in Shewanella baltica (strain OS223).